Here is a 453-residue protein sequence, read N- to C-terminus: tRNA modification GTPase MnmE (453 aa).

3 residues coordinate (6S)-5-formyl-5,6,7,8-tetrahydrofolate: Arg22, Glu79, and Lys119. The region spanning 215 to 376 (GMKVVIAGRP…LKQHLKSLMG (162 aa)) is the TrmE-type G domain. Asn225 lines the K(+) pocket. Residues 225–230 (NAGKSS), 244–250 (TEIAGTT), 269–272 (DTAG), and 334–337 (NKAD) each bind GTP. Ser229 contacts Mg(2+). Residues Thr244, Ile246, and Thr249 each contribute to the K(+) site. Thr250 is a binding site for Mg(2+). Lys453 serves as a coordination point for (6S)-5-formyl-5,6,7,8-tetrahydrofolate.

The protein belongs to the TRAFAC class TrmE-Era-EngA-EngB-Septin-like GTPase superfamily. TrmE GTPase family. In terms of assembly, homodimer. Heterotetramer of two MnmE and two MnmG subunits. Requires K(+) as cofactor.

It localises to the cytoplasm. Functionally, exhibits a very high intrinsic GTPase hydrolysis rate. Involved in the addition of a carboxymethylaminomethyl (cmnm) group at the wobble position (U34) of certain tRNAs, forming tRNA-cmnm(5)s(2)U34. The chain is tRNA modification GTPase MnmE from Shewanella oneidensis (strain ATCC 700550 / JCM 31522 / CIP 106686 / LMG 19005 / NCIMB 14063 / MR-1).